Reading from the N-terminus, the 508-residue chain is Glycerol kinase (508 aa).

T17 serves as a coordination point for ADP. Residues T17, T18, and S19 each contribute to the ATP site. Residue T17 coordinates sn-glycerol 3-phosphate. R21 serves as a coordination point for ADP. Sn-glycerol 3-phosphate is bound by residues R87, E88, Y139, and D256. Residues R87, E88, Y139, D256, and Q257 each coordinate glycerol. 2 residues coordinate ADP: T278 and G322. Positions 278, 322, 326, and 423 each coordinate ATP. A423 and N427 together coordinate ADP.

This sequence belongs to the FGGY kinase family.

The catalysed reaction is glycerol + ATP = sn-glycerol 3-phosphate + ADP + H(+). Its pathway is polyol metabolism; glycerol degradation via glycerol kinase pathway; sn-glycerol 3-phosphate from glycerol: step 1/1. Inhibited by fructose 1,6-bisphosphate (FBP). Its function is as follows. Key enzyme in the regulation of glycerol uptake and metabolism. Catalyzes the phosphorylation of glycerol to yield sn-glycerol 3-phosphate. This chain is Glycerol kinase, found in Corynebacterium efficiens (strain DSM 44549 / YS-314 / AJ 12310 / JCM 11189 / NBRC 100395).